Reading from the N-terminus, the 257-residue chain is Acetylglutamate kinase (257 aa).

Substrate is bound by residues 43–44 (GG), arginine 65, and asparagine 157. ATP contacts are provided by residues 180 to 185 (DVSGIL) and 208 to 210 (IIT).

Belongs to the acetylglutamate kinase family. ArgB subfamily. As to quaternary structure, homodimer.

It localises to the cytoplasm. The enzyme catalyses N-acetyl-L-glutamate + ATP = N-acetyl-L-glutamyl 5-phosphate + ADP. It participates in amino-acid biosynthesis; L-arginine biosynthesis; N(2)-acetyl-L-ornithine from L-glutamate: step 2/4. Its function is as follows. Catalyzes the ATP-dependent phosphorylation of N-acetyl-L-glutamate. This is Acetylglutamate kinase from Salmonella paratyphi B (strain ATCC BAA-1250 / SPB7).